The sequence spans 250 residues: 2,5-dichloro-2,5-cyclohexadiene-1,4-diol dehydrogenase LinX (250 aa).

NAD(+) is bound by residues D38, D64, V65, Y156, K160, T191, and T194. Y156 serves as the catalytic Proton acceptor.

Belongs to the short-chain dehydrogenases/reductases (SDR) family.

It catalyses the reaction 2,5-dichlorocyclohexa-2,5-dien-1,4-diol + NAD(+) = 2,5-dichlorohydroquinone + NADH + H(+). In terms of biological role, catalyzes the degradation of 2,5-dichloro-2,5-cyclohexadiene-1,4-diol (2,5-DDOL) into 2,5-dichlorohydroquinone (2,5-DCHQ) in vitro. LinX appears not to be involved in gamma-hexachlorocyclohexane (gamma-HCH) degradation pathway, in contrast to LinC which has the same enzymatic activity. The sequence is that of 2,5-dichloro-2,5-cyclohexadiene-1,4-diol dehydrogenase LinX from Sphingobium indicum (strain DSM 16412 / CCM 7286 / MTCC 6364 / B90A).